The primary structure comprises 273 residues: 1,4-dihydroxy-2-naphthoyl-CoA synthase (273 aa).

Residues Arg-34, 73–77 (SGGDQ), Tyr-85, 117–121 (YAVGG), Thr-143, Ser-149, Tyr-246, and Lys-261 contribute to the substrate site. 142-144 (QTG) contacts hydrogencarbonate. Basic and acidic residues predominate over residues 254–265 (GRDAFKEKRDPD). Residues 254-273 (GRDAFKEKRDPDFDQFPKFP) are disordered.

It belongs to the enoyl-CoA hydratase/isomerase family. MenB subfamily. Hydrogencarbonate is required as a cofactor.

The catalysed reaction is 2-succinylbenzoyl-CoA + H(+) = 1,4-dihydroxy-2-naphthoyl-CoA + H2O. It functions in the pathway quinol/quinone metabolism; 1,4-dihydroxy-2-naphthoate biosynthesis; 1,4-dihydroxy-2-naphthoate from chorismate: step 6/7. The protein operates within quinol/quinone metabolism; menaquinone biosynthesis. In terms of biological role, converts o-succinylbenzoyl-CoA (OSB-CoA) to 1,4-dihydroxy-2-naphthoyl-CoA (DHNA-CoA). The sequence is that of 1,4-dihydroxy-2-naphthoyl-CoA synthase from Staphylococcus aureus (strain MRSA252).